A 238-amino-acid chain; its full sequence is Large ribosomal subunit protein bL17m (238 aa).

Belongs to the bacterial ribosomal protein bL17 family. Component of the mitochondrial large ribosomal subunit (mt-LSU). Mature yeast 74S mitochondrial ribosomes consist of a small (37S) and a large (54S) subunit. The 37S small subunit contains a 15S ribosomal RNA (15S mt-rRNA) and 34 different proteins. The 54S large subunit contains a 21S rRNA (21S mt-rRNA) and 46 different proteins.

The protein localises to the mitochondrion. Functionally, component of the mitochondrial ribosome (mitoribosome), a dedicated translation machinery responsible for the synthesis of mitochondrial genome-encoded proteins, including at least some of the essential transmembrane subunits of the mitochondrial respiratory chain. The mitoribosomes are attached to the mitochondrial inner membrane and translation products are cotranslationally integrated into the membrane. This Saccharomyces cerevisiae (strain ATCC 204508 / S288c) (Baker's yeast) protein is Large ribosomal subunit protein bL17m (MRPL8).